Reading from the N-terminus, the 122-residue chain is MIQQESQLKVADNTGAKRVKCFKVLGGSRRRYATVGDVIVCSVRDVEPDSSVKKGDVVKAVIVRTRRNILRKDGSSLKFDTNSCVIIDEKGNPKGTRIFGPIAREIRDRGFVKISSLAPEVI.

Belongs to the universal ribosomal protein uL14 family. In terms of assembly, part of the 50S ribosomal subunit. Forms a cluster with proteins L3 and L19. In the 70S ribosome, L14 and L19 interact and together make contacts with the 16S rRNA in bridges B5 and B8.

Binds to 23S rRNA. Forms part of two intersubunit bridges in the 70S ribosome. The polypeptide is Large ribosomal subunit protein uL14 (Chlamydia abortus (strain DSM 27085 / S26/3) (Chlamydophila abortus)).